The sequence spans 548 residues: Aromatic ammonia-lyase (548 aa).

Y55 serves as the catalytic Proton donor/acceptor. The segment at residues 144 to 146 is a cross-link (5-imidazolinone (Ala-Gly)); the sequence is ASG. S145 is subject to 2,3-didehydroalanine (Ser). Residues N200, Q288, R294, N324, K396, E425, and N428 each coordinate (E)-cinnamate.

The protein belongs to the PAL/histidase family. In terms of assembly, homotetramer. In terms of processing, contains an active site 4-methylidene-imidazol-5-one (MIO), which is formed autocatalytically by cyclization and dehydration of residues Ala-Ser-Gly.

It catalyses the reaction L-phenylalanine = (E)-cinnamate + NH4(+). The enzyme catalyses L-tyrosine = (E)-4-coumarate + NH4(+). The catalysed reaction is 3,4-dimethoxy-L-phenylalanine = 3,4-dimethoxy-(E)-cinnamate + NH4(+). Its pathway is phenylpropanoid metabolism; trans-cinnamate biosynthesis; trans-cinnamate from L-phenylalanine: step 1/1. Aromatic ammonia-lyase (AAL) that shows reduced activity to catalyze the non-oxidative ammonia elimination from the canonical AAL substrates L-Phe and L-Tyr, contrasted by its pronounced efficiency towards substrates with electron-donor aromatic substituents such as 3,4-dimethoxy-L-phenylalanine. Is also able to catalyze the reverse reaction in vitro, i.e. the ammonia addition reaction to cinnamate derivatives, producing enantiopure phenylalanine derivatives. Shows no activity with L-His. This chain is Aromatic ammonia-lyase, found in Loktanella atrilutea.